A 66-amino-acid chain; its full sequence is Large ribosomal subunit protein uL29 (66 aa).

The protein belongs to the universal ribosomal protein uL29 family.

In Borrelia turicatae (strain 91E135), this protein is Large ribosomal subunit protein uL29.